Reading from the N-terminus, the 188-residue chain is Protein GrpE (188 aa).

A compositionally biased stretch (basic and acidic residues) spans 1–16; the sequence is MEERNEQVVEEVKEAQ. A disordered region spans residues 1–31; that stretch reads MEERNEQVVEEVKEAQVEEAVTPENSEETVE.

This sequence belongs to the GrpE family. Homodimer.

It localises to the cytoplasm. Its function is as follows. Participates actively in the response to hyperosmotic and heat shock by preventing the aggregation of stress-denatured proteins, in association with DnaK and GrpE. It is the nucleotide exchange factor for DnaK and may function as a thermosensor. Unfolded proteins bind initially to DnaJ; upon interaction with the DnaJ-bound protein, DnaK hydrolyzes its bound ATP, resulting in the formation of a stable complex. GrpE releases ADP from DnaK; ATP binding to DnaK triggers the release of the substrate protein, thus completing the reaction cycle. Several rounds of ATP-dependent interactions between DnaJ, DnaK and GrpE are required for fully efficient folding. This chain is Protein GrpE, found in Bacillus cereus (strain G9842).